The sequence spans 396 residues: G-protein coupled receptor 84 (396 aa).

Topologically, residues 1-26 (MWNSSDANFSCYHESVLGYRYVAVSW) are extracellular. Residues N3 and N8 are each glycosylated (N-linked (GlcNAc...) asparagine). The helical transmembrane segment at 27–47 (GVVVAVTGTVGNVLTLLALAI) threads the bilayer. Over 48–57 (QPKLRTRFNL) the chain is Cytoplasmic. A helical membrane pass occupies residues 58-78 (LIANLTLADLLYCTLLQPFSV). Residues 79 to 94 (DTYLHLHWRTGATFCR) are Extracellular-facing. The chain crosses the membrane as a helical span at residues 95–115 (VFGLLLFASNSVSILTLCLIA). Topologically, residues 116–144 (LGRYLLIAHPKLFPQVFSAKGIVLALVST) are cytoplasmic. The helical transmembrane segment at 145–165 (WVVGVASFAPLWPIYILVPVV) threads the bilayer. Over 166–180 (CTCSFDRIRGRPYTT) the chain is Extracellular. A helical transmembrane segment spans residues 181–201 (ILMGIYFVLGLSSVGIFYCLI). Residues 202-320 (HRQVKRAAQA…SSEFGKVTRM (119 aa)) are Cytoplasmic-facing. Residues S221 and S224 each carry the phosphoserine modification. A disordered region spans residues 244-311 (RLASGGPSEG…KGARRAPDSS (68 aa)). The span at 247-260 (SGGPSEGISSEPVS) shows a compositional bias: low complexity. Residues T263 and T264 each carry the phosphothreonine modification. A helical membrane pass occupies residues 321 to 341 (CFAVFLCFALSYIPFLLLNIL). At 342 to 352 (DARVQAPRVVH) the chain is on the extracellular side. Residues 353–373 (MLAANLTWLNGCINPVLYAAM) traverse the membrane as a helical segment. The Cytoplasmic segment spans residues 374–396 (NRQFRQAYGSILKRGPRSFHRLH).

The protein belongs to the G-protein coupled receptor 1 family. In terms of assembly, interacts with ARRB2 and ARR3. Post-translationally, phosphorylated by a subset of GPR84-activating ligands. Constitutively phosphorylated at Ser-221 and Ser-224 in the absence of 2-HTP. By contrast, Thr-263 and Thr-264 are phosphorylated only following prior cell treatment with 2-HTP. As to expression, expressed predominantly in hematopoietic tissues. High levels detected in the bone marrow and lower levels in the peripheral leukocytes and lung. Also expressed in brain, heart, muscle, colon, thymus, spleen, kidney, liver, placenta and intestine. Within the leukocyte population expression is higher in neutrophils and eosinophils relative to T- or B-lymphocytes.

Its subcellular location is the cell membrane. Its function is as follows. G protein-coupled receptor that responds endogenously to dietary fatty acids or nutrient, specifically medium-chain free fatty acid (FFA) with carbon chain lengths of C9 to C14. Capric acid (C10:0), undecanoic acid (C11:0) and lauric acid (C12:0) are the most potent agonists. In immune cells, functions as a pro-inflammatory receptor via 6-OAU and promotes the expression of pro-inflammatory mediators such as TNFalpha, IL-6 and IL-12B as well as stimulating chemotactic responses through activation of signaling mediators AKT, ERK and NF-kappa-B. In addition, triggers increased bacterial adhesion and phagocytosis in macrophages and regulates pro-inflammatory function via enhancing NLRP3 inflammasome activation. Also plays an important role in inflammation by modulating neutrophil functions. Mechanistically, promotes neutrophil chemotaxis, reactive oxygen species (ROS) production and degranulation via LYN-AKT/ERK pathway. To regulate ROS, communicates with the two formyl peptide receptors FPR2 and FPR1 to control the NADPH oxidase activity in neutrophils. The polypeptide is G-protein coupled receptor 84 (GPR84) (Homo sapiens (Human)).